Reading from the N-terminus, the 572-residue chain is MRTSQYLLSTQKETPADAEVISHQLMLRAGMIRKLASGLYTWLPTGVRVLKKVENIVREEMNNAGAIEVSMPVVQPADLWQESGRWEQYGPELLRFVDRGERPFVLGPTHEEVITDLIRGEINSYKQLPLNFFQIQTKFRDEVRPRFGVMRAREFLMKDAYSFHTTQESLQETYDAMYTAYSKIFSRMDLNFRAVLADTGSIGGSASHEFQVLAESGEDDIVFSTGSDYAANIEFAEALAPTEPRAPATEELRIVDTPNAKTIAELVEQFKLPIEKTVKTLLVHAHEESGHKLVALLVRGDHDLNEIKAEKLPQVAKPLTFASEEEIRAAIGAGPGSLGPVNLSLPVIADRSVAVMSDFGAGANIDGKHYFGINWERDLALPLVADLRNVVEGDISPDGKGTLQIKRGIEVGHIFQLGTKYSEAMKATVQGEDGRNQVMTMGCYGIGVSRVVAAAIEQNHDDRGIIWPDAIAPFQVAILPMNMHKSFRVKELAEELYTTLRSHGIDVILDDRKERPGVMFADMELIGVPHNIVIGDRNLDSEEVEYKNRRVGEKQMIKTSEIVEFLLSQIKR.

This sequence belongs to the class-II aminoacyl-tRNA synthetase family. ProS type 1 subfamily. In terms of assembly, homodimer.

It localises to the cytoplasm. It catalyses the reaction tRNA(Pro) + L-proline + ATP = L-prolyl-tRNA(Pro) + AMP + diphosphate. In terms of biological role, catalyzes the attachment of proline to tRNA(Pro) in a two-step reaction: proline is first activated by ATP to form Pro-AMP and then transferred to the acceptor end of tRNA(Pro). As ProRS can inadvertently accommodate and process non-cognate amino acids such as alanine and cysteine, to avoid such errors it has two additional distinct editing activities against alanine. One activity is designated as 'pretransfer' editing and involves the tRNA(Pro)-independent hydrolysis of activated Ala-AMP. The other activity is designated 'posttransfer' editing and involves deacylation of mischarged Ala-tRNA(Pro). The misacylated Cys-tRNA(Pro) is not edited by ProRS. This chain is Proline--tRNA ligase, found in Yersinia pseudotuberculosis serotype O:1b (strain IP 31758).